A 2212-amino-acid chain; its full sequence is Nonribosomal peptide synthetase ftmPS (2212 aa).

The segment at 74–473 (TYAELDSLSD…IEHHLQQTLP (400 aa)) is adenylation 1. In terms of domain architecture, Carrier 1 spans 592 to 669 (PPSTLKETTI…EQSQRAGLIQ (78 aa)). Residue serine 629 is modified to O-(pantetheine 4'-phosphoryl)serine. The segment at 708–973 (EDIYPCTALQ…IATVPLRIRV (266 aa)) is condensation 1. The adenylation 2 stretch occupies residues 1167 to 1564 (TYRELWAHSS…LSAVEASLMR (398 aa)). The Carrier 2 domain occupies 1678–1757 (PMSDDNERRL…QFRHLITEDD (80 aa)). Position 1715 is an O-(pantetheine 4'-phosphoryl)serine (serine 1715). The interval 1815-2070 (HFQFDLSGAI…CTNYIPYRLS (256 aa)) is condensation 2.

It belongs to the NRP synthetase family.

The catalysed reaction is L-proline + L-tryptophan + 2 ATP = brevianamide F + 2 AMP + 2 diphosphate + 2 H(+). It functions in the pathway mycotoxin biosynthesis. Its function is as follows. Nonribosomal peptide synthetase; part of the gene cluster that mediates the biosynthesis of fumitremorgins, indole alkaloids that carry not only intriguing chemical structures, but also interesting biological and pharmacological activities. The biosynthesis of fumitremorgin-type alkaloids begins by condensation of the two amino acids L-tryptophan and L-proline to brevianamide F, catalyzed by the non-ribosomal peptide synthetase ftmPS/ftmA. Brevianamide F is then prenylated by the prenyltransferase ftmPT1/ftmB in the presence of dimethylallyl diphosphate, resulting in the formation of tryprostatin B. The three cytochrome P450 monooxygenases, ftmP450-1/ftmC, ftmP450-2/ftmE and ftmP450-3/FtmG, are responsible for the conversion of tryprostatin B to 6-hydroxytryprostatin B, tryprostatin A to fumitremorgin C and fumitremorgin C to 12,13-dihydroxyfumitremorgin C, respectively. The putative methyltransferase ftmMT/ftmD is expected for the conversion of 6-hydroxytryprostatin B to tryprostatin A. FtmPT2/FtmH catalyzes the prenylation of 12,13-dihydroxyfumitre-morgin C in the presence of dimethylallyl diphosphate, resulting in the formation of fumitremorgin B. Fumitremorgin B is further converted to verruculogen by ftmOx1/ftmF via the insertion of an endoperoxide bond between the two prenyl moieties. Finally, verruculogen is further converted to fumitremorgin A by the verruculogen prenyltransferase ftmPT3. The chain is Nonribosomal peptide synthetase ftmPS (ftmPS) from Neosartorya fischeri (strain ATCC 1020 / DSM 3700 / CBS 544.65 / FGSC A1164 / JCM 1740 / NRRL 181 / WB 181) (Aspergillus fischerianus).